Here is a 263-residue protein sequence, read N- to C-terminus: Lens fiber major intrinsic protein (263 aa).

Topologically, residues 1 to 12 (MWELRSASFWRA) are cytoplasmic. The helical transmembrane segment at 13 to 30 (IFAEFFATLFYVFFGLGA) threads the bilayer. At 31-40 (SLRWAPGPLH) the chain is on the extracellular side. Residues 41–59 (VLQVALAFGLALATLVQAV) traverse the membrane as a helical segment. Topologically, residues 60–63 (GHIS) are cytoplasmic. Positions 64–76 (GAHVNPAVTFAFL) form an intramembrane region, discontinuously helical. The short motif at 68–70 (NPA) is the NPA 1 element. Over 77–85 (VGSQMSLLR) the chain is Cytoplasmic. The chain crosses the membrane as a helical span at residues 86-106 (AICYVVAQLLGAVAGAAVLYS). Topologically, residues 107 to 126 (VTPPAVRGNLALNTLHPGVS) are extracellular. The chain crosses the membrane as a helical span at residues 127-147 (VGQATIVEIFLTLQFVLCIFA). Residues 148-157 (TYDERRNGRL) are Cytoplasmic-facing. The helical transmembrane segment at 158-175 (GSVALAVGFSLTLGHLFG) threads the bilayer. The Extracellular portion of the chain corresponds to 176–177 (MY). Residues 178 to 193 (YTGAGMNPARSFAPAI) constitute an intramembrane region (discontinuously helical). An NPA 2 motif is present at residues 184–186 (NPA). Residues 194-200 (LTRNFTN) are Extracellular-facing. The chain crosses the membrane as a helical span at residues 201-218 (HWVYWVGPVIGAGLGSLL). Residues 219-263 (YDFLLFPRLKSVSERLSILKGTRPSESNGQPEVTGEPVELKTQAL) are Cytoplasmic-facing. An interaction with CALM region spans residues 227 to 237 (LKSVSERLSIL). Residues Ser-235, Ser-243, and Ser-245 each carry the phosphoserine modification. The interval 240-263 (TRPSESNGQPEVTGEPVELKTQAL) is disordered.

Belongs to the MIP/aquaporin (TC 1.A.8) family. Homotetramer; each monomer provides an independent water pore. Two homotetramers on opposing membranes can dimerize, forming a cell-cell junction. Interacts with CALM; the calcium-calmodulin/CALM complex interacts with the cytoplasmic domains of two aquaporins, leading to channel closure. Interacts with BFSP1 (via C-terminus); prevents calcium-dependent inhibition of the water channel activity. In terms of processing, subject to partial proteolytic cleavage in the eye lens core. Partial proteolysis promotes interactions between tetramers from adjoining membranes. Post-translationally, fatty acylated at Met-1 and Lys-238. The acyl modifications, in decreasing order of ion abundance, are: oleoyl (C18:1) &gt; palmitoyl (C16:0) &gt; stearoyl (C18:0) &gt; eicosenoyl (C20:1) &gt; dihomo-gamma-linolenoyl (C20:3) &gt; palmitoleoyl (C16:1) &gt; eicosadienoyl (C20:2). In terms of tissue distribution, detected in eye lens (at protein level).

The protein resides in the cell membrane. Its subcellular location is the cell junction. The enzyme catalyses H2O(in) = H2O(out). With respect to regulation, the water channel activity is inhibited by calcium through calmodulin/CALM. Functionally, aquaporins form homotetrameric transmembrane channels, with each monomer independently mediating water transport across the plasma membrane along its osmotic gradient. Specifically expressed in lens fiber cells, this aquaporin is crucial for maintaining lens water homeostasis and transparency. Beyond water permeability, it also acts as a cell-to-cell adhesion molecule, forming thin junctions between lens fiber cells that are essential for maintaining the ordered structure and transparency of the lens. In Ovis aries (Sheep), this protein is Lens fiber major intrinsic protein.